The following is a 194-amino-acid chain: Outer-membrane lipoprotein LolB (194 aa).

An N-terminal signal peptide occupies residues 1–18 (MTLFLRIFTFGCLLLLAG). A lipid anchor (N-palmitoyl cysteine) is attached at C19. Residue C19 is the site of S-diacylglycerol cysteine attachment.

Belongs to the LolB family. As to quaternary structure, monomer.

Its subcellular location is the cell outer membrane. In terms of biological role, plays a critical role in the incorporation of lipoproteins in the outer membrane after they are released by the LolA protein. This chain is Outer-membrane lipoprotein LolB, found in Aeromonas salmonicida (strain A449).